We begin with the raw amino-acid sequence, 419 residues long: Ubiquitin-like modifier-activating enzyme 5 (419 aa).

The interval 18-47 (NRLGNVKKDHPLESSSNSKPTHQPKSPAPY) is disordered. Over residues 30 to 41 (ESSSNSKPTHQP) the composition is skewed to polar residues. 5 residues coordinate ATP: Gly-94, Asp-115, Lys-138, Asn-161, and Asn-194. 2 residues coordinate Zn(2+): Cys-236 and Cys-239. Cys-260 acts as the Glycyl thioester intermediate in catalysis. Zn(2+) contacts are provided by Cys-313 and Cys-318.

It belongs to the ubiquitin-activating E1 family. UBA5 subfamily. Interacts with ufc-1. In terms of tissue distribution, expressed in the intestine.

Its function is as follows. E1-like enzyme which activates ufm-1. Required for interaction between ufm-1 and ufc-1. This Caenorhabditis elegans protein is Ubiquitin-like modifier-activating enzyme 5.